The primary structure comprises 338 residues: Inorganic pyrophosphatase (338 aa).

Arg-129 lines the diphosphate pocket. Mg(2+)-binding residues include Asp-166, Asp-171, and Asp-203.

This sequence belongs to the PPase family. In terms of assembly, component of the NURF complex composed of Caf1-55, E(bx), Nurf-38 and Iswi. Mg(2+) serves as cofactor.

It localises to the cytoplasm. The protein localises to the nucleus. The catalysed reaction is diphosphate + H2O = 2 phosphate + H(+). Component of NURF (nucleosome remodeling factor), a complex which catalyzes ATP-dependent nucleosome sliding and facilitates transcription of chromatin. NURF is required for homeotic gene expression, proper larval blood cell development, normal male X chromosome morphology, ecdysteroid signaling and metamorphosis. Inorganic pyrophosphatase (PPase), hydrolyzes inorganic pyrophosphate to inorganic phosphate, essential for driving critical biosynthetic reactions including transcription, replication, and DNA repair. This Drosophila melanogaster (Fruit fly) protein is Inorganic pyrophosphatase (Nurf-38).